The following is a 3332-amino-acid chain: Nonribosomal peptide synthetase imqB (3332 aa).

The tract at residues 230–622 (FSEQVKAHPG…IGRKDTQVKV (393 aa)) is adenylation 1. Residues 764-846 (GRITPQEKLL…DMARCITRVD (83 aa)) enclose the Carrier 1 domain. S801 bears the O-(pantetheine 4'-phosphoryl)serine mark. The segment at 886–1314 (DIYPCTPLQE…NCLTRKELHQ (429 aa)) is condensation 1. Positions 1336 to 1740 (EVSNTRPTAP…GRKDRQLKVR (405 aa)) are adenylation 2. The Carrier 2 domain occupies 1880–1954 (AIATPKEEKL…EMAEKAAETG (75 aa)). At S1915 the chain carries O-(pantetheine 4'-phosphoryl)serine. Positions 1992–2402 (EDIYPCTPLQ…CLSEIDTQQI (411 aa)) are condensation 2. The tract at residues 2422–2819 (AQQAREHPAT…GRKDTQVKIR (398 aa)) is adenylation 3. Residues 2963–3039 (EVATNDEAAV…DLASRIGRVE (77 aa)) form the Carrier 3 domain. O-(pantetheine 4'-phosphoryl)serine is present on S3000. Positions 3058 to 3323 (SSNPTLIQGQ…ETTRHIRDFC (266 aa)) are thioesterase (TE) domain.

It belongs to the NRP synthetase family.

Its pathway is secondary metabolite biosynthesis. In terms of biological role, nonribosomal peptide synthetase; part of the gene cluster that mediates the biosynthesis of imizoquins A to D, tripeptide-derived alkaloids that serve a protective role against oxidative stress that are essential for normal germination. ImqB is a canonical three-module NRPS that assembles the tripeptide backbone of the imizoquins via condensation of Trp, Tyr, and Leu-derived precursors. N-methylation by imqF and phenol oxidation by imqC, followed by cyclization via the FAD-dependent oxidase imqH carry out the three-step transformation of L-tyrosine into tetrahydroisoquinoline. Importantly, this sequence requires the presence of a free amine in the tyrosine moiety, indicating that isoquinoline formation occurs prior to peptide bond formation. The imidazolidin-4-one ring of imizoquins could form following additional oxidation of the methyl-derived bridgehead carbon by imqH. Lastly, O-methylation by imqG and leucine hydroxylation by imqE complete biosynthesis of the imizoquins. In Aspergillus flavus (strain ATCC 200026 / FGSC A1120 / IAM 13836 / NRRL 3357 / JCM 12722 / SRRC 167), this protein is Nonribosomal peptide synthetase imqB.